Here is a 252-residue protein sequence, read N- to C-terminus: Trans-aconitate 2-methyltransferase (252 aa).

Belongs to the methyltransferase superfamily. Tam family.

The protein localises to the cytoplasm. It carries out the reaction trans-aconitate + S-adenosyl-L-methionine = (E)-3-(methoxycarbonyl)pent-2-enedioate + S-adenosyl-L-homocysteine. In terms of biological role, catalyzes the S-adenosylmethionine monomethyl esterification of trans-aconitate. In Escherichia fergusonii (strain ATCC 35469 / DSM 13698 / CCUG 18766 / IAM 14443 / JCM 21226 / LMG 7866 / NBRC 102419 / NCTC 12128 / CDC 0568-73), this protein is Trans-aconitate 2-methyltransferase.